The sequence spans 654 residues: Tetratricopeptide repeat protein 30 homolog (654 aa).

TPR repeat units follow at residues 10-43 (DGEY…STTR), 44-76 (AGLS…VPDV), 145-178 (ASTK…GGFN), 180-212 (HVAY…GIRN), 393-426 (CRSA…RAWI), 452-485 (SWRL…NYDD), and 535-568 (CIVN…GSGA).

The protein belongs to the TTC30/dfy-1/fleer family.

The protein localises to the cell projection. Its subcellular location is the cilium. Functionally, required for polyglutamylation of axonemal tubulin in sensory cilia. Plays a role in anterograde intraflagellar transport (IFT), the process by which cilia precursors are transported from the base of the cilium to the site of their incorporation at the tip. This chain is Tetratricopeptide repeat protein 30 homolog, found in Anopheles gambiae (African malaria mosquito).